Consider the following 344-residue polypeptide: N-acetyl-gamma-glutamyl-phosphate reductase (344 aa).

The active site involves Cys150.

It belongs to the NAGSA dehydrogenase family. Type 1 subfamily.

The protein resides in the cytoplasm. It carries out the reaction N-acetyl-L-glutamate 5-semialdehyde + phosphate + NADP(+) = N-acetyl-L-glutamyl 5-phosphate + NADPH + H(+). Its pathway is amino-acid biosynthesis; L-arginine biosynthesis; N(2)-acetyl-L-ornithine from L-glutamate: step 3/4. Catalyzes the NADPH-dependent reduction of N-acetyl-5-glutamyl phosphate to yield N-acetyl-L-glutamate 5-semialdehyde. The polypeptide is N-acetyl-gamma-glutamyl-phosphate reductase (Pseudomonas paraeruginosa (strain DSM 24068 / PA7) (Pseudomonas aeruginosa (strain PA7))).